The following is a 321-amino-acid chain: Porphobilinogen deaminase (321 aa).

Cys-243 bears the S-(dipyrrolylmethanemethyl)cysteine mark.

Belongs to the HMBS family. As to quaternary structure, monomer. Dipyrromethane is required as a cofactor.

It catalyses the reaction 4 porphobilinogen + H2O = hydroxymethylbilane + 4 NH4(+). It participates in porphyrin-containing compound metabolism; protoporphyrin-IX biosynthesis; coproporphyrinogen-III from 5-aminolevulinate: step 2/4. Functionally, tetrapolymerization of the monopyrrole PBG into the hydroxymethylbilane pre-uroporphyrinogen in several discrete steps. In Histophilus somni (strain 129Pt) (Haemophilus somnus), this protein is Porphobilinogen deaminase.